A 156-amino-acid polypeptide reads, in one-letter code: Arginine repressor (156 aa).

It belongs to the ArgR family.

It localises to the cytoplasm. It participates in amino-acid biosynthesis; L-arginine biosynthesis [regulation]. In terms of biological role, regulates arginine biosynthesis genes. This Shigella boydii serotype 18 (strain CDC 3083-94 / BS512) protein is Arginine repressor.